The chain runs to 217 residues: Protein-L-isoaspartate O-methyltransferase (217 aa).

The active site involves Ser-59.

Belongs to the methyltransferase superfamily. L-isoaspartyl/D-aspartyl protein methyltransferase family.

It is found in the cytoplasm. The catalysed reaction is [protein]-L-isoaspartate + S-adenosyl-L-methionine = [protein]-L-isoaspartate alpha-methyl ester + S-adenosyl-L-homocysteine. Its function is as follows. Catalyzes the methyl esterification of L-isoaspartyl residues in peptides and proteins that result from spontaneous decomposition of normal L-aspartyl and L-asparaginyl residues. It plays a role in the repair and/or degradation of damaged proteins. The protein is Protein-L-isoaspartate O-methyltransferase (pcm) of Methanothermobacter thermautotrophicus (strain ATCC 29096 / DSM 1053 / JCM 10044 / NBRC 100330 / Delta H) (Methanobacterium thermoautotrophicum).